The sequence spans 66 residues: Ocellatin-PT3 (66 aa).

The first 22 residues, 1 to 22 (MAFLKKSLFLVLFLGLVSLSIC), serve as a signal peptide directing secretion. Residues 23 to 39 (DEEKRQDEDDDDDDDEE) constitute a propeptide that is removed on maturation. A Valine amide modification is found at Val-66.

In terms of tissue distribution, expressed by the skin glands.

The protein resides in the secreted. Has antibacterial activity against Gram-negative bacterium E.coli ATCC 25922 (MIC=320 uM) but not against S.pneumoniae ATCC 700603, S.choleraesuis ATCC 14028 or Gram-positive bacterium S.aureus ATCC 29313. Shows no hemolytic activity and no cytotoxicity. This Leptodactylus pustulatus (Ceara white-lipped frog) protein is Ocellatin-PT3.